Reading from the N-terminus, the 467-residue chain is Replication factor A 51 kDa subunit (467 aa).

A DNA-binding region (OB) is located at residues 23–105 (WWIRARVADK…SNVNNDYELT (83 aa)). The C4-type zinc finger occupies 313-335 (CPTCNKKVTEEGAQGDRFRCEKC).

Belongs to the replication factor A protein 1 family. In terms of assembly, component of the heterotrimeric canonical replication protein A complex (RPA). In terms of processing, the N-terminus is blocked.

It localises to the nucleus. Its function is as follows. As part of the heterotrimeric replication protein A complex (RPA/RP-A), binds and stabilizes single-stranded DNA intermediates, that form during DNA replication or upon DNA stress. It prevents their reannealing and in parallel, recruits and activates different proteins and complexes involved in DNA metabolism. Thereby, it plays an essential role both in DNA replication and the cellular response to DNA damage. The sequence is that of Replication factor A 51 kDa subunit (RPA1) from Crithidia fasciculata.